Consider the following 453-residue polypeptide: GTPase Der (453 aa).

EngA-type G domains follow at residues 3–167 and 188–361; these read PIIV…INSK and VKIA…HTSQ. Residues 9–16, 57–61, 119–122, 194–201, 241–245, and 306–309 contribute to the GTP site; these read GRTNVGKS, DTAGI, NKID, GKPNVGKS, DTAGM, and NKCD. In terms of domain architecture, KH-like spans 362–446; it reads KKIKTSQVMK…PIKIQFKETM (85 aa).

The protein belongs to the TRAFAC class TrmE-Era-EngA-EngB-Septin-like GTPase superfamily. EngA (Der) GTPase family. Associates with the 50S ribosomal subunit.

In terms of biological role, GTPase that plays an essential role in the late steps of ribosome biogenesis. The chain is GTPase Der from Buchnera aphidicola subsp. Schizaphis graminum (strain Sg).